The primary structure comprises 267 residues: GTP cyclohydrolase FolE2 2 (267 aa).

The protein belongs to the GTP cyclohydrolase IV family.

The catalysed reaction is GTP + H2O = 7,8-dihydroneopterin 3'-triphosphate + formate + H(+). The protein operates within cofactor biosynthesis; 7,8-dihydroneopterin triphosphate biosynthesis; 7,8-dihydroneopterin triphosphate from GTP: step 1/1. Converts GTP to 7,8-dihydroneopterin triphosphate. The chain is GTP cyclohydrolase FolE2 2 from Cupriavidus metallidurans (strain ATCC 43123 / DSM 2839 / NBRC 102507 / CH34) (Ralstonia metallidurans).